Consider the following 297-residue polypeptide: MSGLRQIAFYGKGGIGKSTTSQNTLAALVDLGQKILIVGCDPKADSTRLILNAKAQDTVLHLAAQEGSVEDLELQDVLKIGYKDIKCVESGGPEPGVGCAGRGVITSINFLEENGAYDNVDYVSYDVLGDVVCGGFAMPIRENKAQEIYIVMSGEMMALYAANNIAKGILKYAHSGGVRLGGLICNERQTDRELDLSEALAARLNSKLIHFVPRDNIVQHAELRKMTVIQYAPDSKQAGEYRALAEKIHGNSGQGTIPTPITMEELEDMLLDFGIMKTDEQMLAELQAKEAKLAVAQ.

11 to 18 (GKGGIGKS) is a binding site for ATP. Residue Cys99 coordinates [4Fe-4S] cluster. Arg102 is subject to ADP-ribosylarginine; by dinitrogenase reductase ADP-ribosyltransferase. [4Fe-4S] cluster is bound at residue Cys133.

It belongs to the NifH/BchL/ChlL family. In terms of assembly, homodimer. The cofactor is [4Fe-4S] cluster. In terms of processing, the reversible ADP-ribosylation of Arg-102 inactivates the nitrogenase reductase and regulates nitrogenase activity.

It carries out the reaction N2 + 8 reduced [2Fe-2S]-[ferredoxin] + 16 ATP + 16 H2O = H2 + 8 oxidized [2Fe-2S]-[ferredoxin] + 2 NH4(+) + 16 ADP + 16 phosphate + 6 H(+). Functionally, the key enzymatic reactions in nitrogen fixation are catalyzed by the nitrogenase complex, which has 2 components: the iron protein and the molybdenum-iron protein. The protein is Nitrogenase iron protein of Mesorhizobium japonicum (strain LMG 29417 / CECT 9101 / MAFF 303099) (Mesorhizobium loti (strain MAFF 303099)).